We begin with the raw amino-acid sequence, 291 residues long: HTH-type transcriptional regulator CitR (291 aa).

The HTH lysR-type domain maps to 1-58; it reads MDFKWLHTFVTAAKYENFRKTAETLFLSQPTVTVHIKQLEKEISCKLFERKGRQIQLT. Positions 18–37 form a DNA-binding region, H-T-H motif; it reads FRKTAETLFLSQPTVTVHIK.

It belongs to the LysR transcriptional regulatory family.

The protein localises to the cytoplasm. Negative regulatory protein for the citA gene for citrate synthase I. This is HTH-type transcriptional regulator CitR (citR) from Bacillus subtilis (strain 168).